We begin with the raw amino-acid sequence, 283 residues long: Putative aquaporin NIP4-1 (283 aa).

Met1 is modified (N-acetylmethionine). The next 2 membrane-spanning stretches (helical) occupy residues 45–65 (LIAEMIGTYFIVFSGCGVVVV) and 70–90 (GGTITFPGICVTWGLIVMVMI). The NPA 1 signature appears at 102–104 (NPA). The next 3 membrane-spanning stretches (helical) occupy residues 122–142 (LYIGAQFAGSLLASLTLRLMF), 161–181 (ALVAEIIISFLLMFVISGVAT), and 189–209 (LAGIAVGMTIMVNVFVAGPIS). Positions 214–216 (NPA) match the NPA 2 motif. Residues 231–251 (IWVYIVGPVLGVISGGFVYNL) form a helical membrane-spanning segment. Ser267 bears the Phosphoserine mark.

It belongs to the MIP/aquaporin (TC 1.A.8) family. NIP (TC 1.A.8.12) subfamily.

The protein localises to the membrane. Functionally, potential aquaporin, which may facilitate the transport of water and small neutral solutes across cell membranes. This chain is Putative aquaporin NIP4-1 (NIP4-1), found in Arabidopsis thaliana (Mouse-ear cress).